The primary structure comprises 272 residues: MDMKRRIHLELRNRTPAAVRELVLDNCKAMDGKIEGLTDEFVNLEFLSLISVGLFSVSDLPKLPKLKKLELSENRIFGGLDRLAEELPSLTHLNLSGNNLKDISTLEPLKRLDCLKSLDLFGCEVTNRSDYRETVFRLLPQLSYLDGYDREDQEAPDSDVEVDSVEEAPDSDGEVDGVDKEEEDEEGEDEEEEEDEDGEEEEDEDEEDEDEDEDVEGEDDEDEVSGEEEEFGHDGEVDEDEEDEDEDEDEEEEESGKGEKRKRETDDEGEDD.

LRR repeat units lie at residues 18-38 (AVRE…EGLT), 43-64 (NLEF…PKLP), 65-87 (KLKK…AEEL), and 89-110 (SLTH…EPLK). The region spanning 123–161 (CEVTNRSDYRETVFRLLPQLSYLDGYDREDQEAPDSDVE) is the LRRCT domain. A compositionally biased stretch (acidic residues) spans 149–254 (DREDQEAPDS…DEDEDEEEEE (106 aa)). The disordered stretch occupies residues 149–272 (DREDQEAPDS…RETDDEGEDD (124 aa)). 2 positions are modified to phosphoserine: serine 164 and serine 171. The segment covering 255 to 265 (SGKGEKRKRET) has biased composition (basic and acidic residues). The Nuclear localization signal signature appears at 260 to 263 (KRKR). Threonine 265 bears the Phosphothreonine mark.

This sequence belongs to the ANP32 family. In terms of assembly, interacts with histones H3 and H4. Interacts with KLF5; this interaction induces promoter region-specific histone incorporation and inhibition of histone acetylation by ANP32B. Some glutamate residues are glycylated by TTLL8. This modification occurs exclusively on glutamate residues and results in a glycine chain on the gamma-carboxyl group. In terms of processing, directly cleaved by caspase-3/CASP3.

Its subcellular location is the nucleus. Its function is as follows. Multifunctional protein that is involved in the regulation of many processes including cell proliferation, apoptosis, cell cycle progression or transcription. Regulates the proliferation of neuronal stem cells, differentiation of leukemic cells and progression from G1 to S phase of the cell cycle. As negative regulator of caspase-3-dependent apoptosis, may act as an antagonist of ANP32A in regulating tissue homeostasis. Exhibits histone chaperone properties, able to recruit histones to certain promoters, thus regulating the transcription of specific genes. Also plays an essential role in the nucleocytoplasmic transport of specific mRNAs via the uncommon nuclear mRNA export receptor XPO1/CRM1. Participates in the regulation of adequate adaptive immune responses by acting on mRNA expression and cell proliferation. The polypeptide is Acidic leucine-rich nuclear phosphoprotein 32 family member B (Anp32b) (Mus musculus (Mouse)).